The sequence spans 648 residues: 1-deoxy-D-xylulose-5-phosphate synthase 1 (648 aa).

Thiamine diphosphate-binding positions include H82 and 123-125; that span reads AHS. Residue D154 participates in Mg(2+) binding. Thiamine diphosphate-binding positions include 155-156, N183, Y292, and E374; that span reads GS. N183 contacts Mg(2+).

The protein belongs to the transketolase family. DXPS subfamily. In terms of assembly, homodimer. Mg(2+) is required as a cofactor. Requires thiamine diphosphate as cofactor.

It carries out the reaction D-glyceraldehyde 3-phosphate + pyruvate + H(+) = 1-deoxy-D-xylulose 5-phosphate + CO2. The protein operates within metabolic intermediate biosynthesis; 1-deoxy-D-xylulose 5-phosphate biosynthesis; 1-deoxy-D-xylulose 5-phosphate from D-glyceraldehyde 3-phosphate and pyruvate: step 1/1. In terms of biological role, catalyzes the acyloin condensation reaction between C atoms 2 and 3 of pyruvate and glyceraldehyde 3-phosphate to yield 1-deoxy-D-xylulose-5-phosphate (DXP). This chain is 1-deoxy-D-xylulose-5-phosphate synthase 1, found in Cereibacter sphaeroides (strain ATCC 17023 / DSM 158 / JCM 6121 / CCUG 31486 / LMG 2827 / NBRC 12203 / NCIMB 8253 / ATH 2.4.1.) (Rhodobacter sphaeroides).